Reading from the N-terminus, the 183-residue chain is uncharacterized protein (183 aa).

Residues 105-149 are compositionally biased toward low complexity; the sequence is YNTNNSNTNTNYNNNNNNNNNNNNNNNNNNNKNNNNNNNNNNSNS. Residues 105–151 are disordered; that stretch reads YNTNNSNTNTNYNNNNNNNNNNNNNNNNNNNKNNNNNNNNNNSNSKI.

This is an uncharacterized protein from Dictyostelium discoideum (Social amoeba).